The chain runs to 900 residues: Endoglucanase H (900 aa).

The N-terminal stretch at 1–44 is a signal peptide; the sequence is MKKRLLVSFLVLSIIVGLLSFQSLGNYNSGLKIGAWVGTQPSES. The GH26 domain occupies 45–298; it reads AIKSFQELQG…NSSPEALAAY (254 aa). Glu131 acts as the Proton donor in catalysis. The active-site Nucleophile is Glu244. The tract at residues 300–630 is catalytic; it reads EAIGAGSSNP…DTEILNALFN (331 aa). Residues 303–326 are disordered; the sequence is GAGSSNPTPTPTWTSTPPSSSPKA. A compositionally biased stretch (low complexity) spans 306–324; that stretch reads SSNPTPTPTWTSTPPSSSP. Catalysis depends on Glu460, which acts as the Proton donor. The active-site Nucleophile is Glu565. The CBM11 domain maps to 655–900; the sequence is AVGEKMLDDF…LLKAISEIPI (246 aa). Residues 827-900 enclose the Dockerin domain; it reads PSIKHGDLNF…LLKAISEIPI (74 aa).

It in the N-terminal section; belongs to the glycosyl hydrolase 5 (cellulase A) family. This sequence in the C-terminal section; belongs to the glycosyl hydrolase 26 family.

It catalyses the reaction Endohydrolysis of (1-&gt;4)-beta-D-glucosidic linkages in cellulose, lichenin and cereal beta-D-glucans.. Functionally, this enzyme catalyzes the endohydrolysis of 1,4-beta-glucosidic linkages in cellulose, lichenin and cereal beta-D-glucans. The protein is Endoglucanase H (celH) of Acetivibrio thermocellus (strain ATCC 27405 / DSM 1237 / JCM 9322 / NBRC 103400 / NCIMB 10682 / NRRL B-4536 / VPI 7372) (Clostridium thermocellum).